The following is a 360-amino-acid chain: Metalloendoproteinase 5-MMP (360 aa).

A signal peptide spans methionine 1 to alanine 20. A propeptide spans lysine 21 to lysine 142 (activation peptide). Residues asparagine 25, asparagine 36, and asparagine 78 are each glycosylated (N-linked (GlcNAc...) asparagine). Positions proline 117–leucine 124 match the Cysteine switch motif. Cysteine 119 provides a ligand contact to Zn(2+). N-linked (GlcNAc...) asparagine glycans are attached at residues asparagine 168 and asparagine 191. Zn(2+) is bound at residue histidine 270. Residue glutamate 271 is part of the active site. The Zn(2+) site is built by histidine 274 and histidine 280. Residues leucine 312–aspartate 336 are disordered. The GPI-anchor amidated serine moiety is linked to residue serine 337. Residues valine 338–valine 360 constitute a propeptide, removed in mature form.

The protein belongs to the peptidase M10A family. Matrix metalloproteinases (MMPs) subfamily. The cofactor is Zn(2+). Mostly expressed in leaves, roots and stems, and, to a lower extent, in flowers.

The protein resides in the cell membrane. Repressed by acetohydroxamic acid (AHA). Matrix metalloproteinases (MMPs) or matrixins may play a role in the degradation and remodeling of the extracellular matrix (ECM) during development or in response to stresses. Active on Mca-KESAbuNLFVLKDpaR-NH(2) (QF75) and, to some extent, on McaPLGLDpaAR-NH(2) (QF24), myelin basic protein (MBP) and beta-casein. This Arabidopsis thaliana (Mouse-ear cress) protein is Metalloendoproteinase 5-MMP.